A 102-amino-acid polypeptide reads, in one-letter code: Small ribosomal subunit protein uS14 (102 aa).

It belongs to the universal ribosomal protein uS14 family. Part of the 30S ribosomal subunit. Contacts proteins S3 and S10.

Functionally, binds 16S rRNA, required for the assembly of 30S particles and may also be responsible for determining the conformation of the 16S rRNA at the A site. This is Small ribosomal subunit protein uS14 from Wolbachia sp. subsp. Brugia malayi (strain TRS).